The chain runs to 713 residues: Bifunctional protein gal10 (713 aa).

The galactowaldenase stretch occupies residues 1–350; sequence MAVQDEYILV…TIENPFGFQI (350 aa). NAD(+) is bound at residue 7-38; sequence YILVTGGAGYIGSHTVIELINHGYKVIIVDNL. The tract at residues 351–713 is mutarotase; that stretch reads DNYKWKLFNT…SASYNSGEYY (363 aa). His532 serves as the catalytic For mutarotase activity.

In the N-terminal section; belongs to the NAD(P)-dependent epimerase/dehydratase family. The protein in the C-terminal section; belongs to the aldose epimerase family. Requires NAD(+) as cofactor.

The catalysed reaction is UDP-alpha-D-glucose = UDP-alpha-D-galactose. It catalyses the reaction alpha-D-glucose = beta-D-glucose. The protein operates within carbohydrate metabolism; galactose metabolism. It functions in the pathway carbohydrate metabolism; hexose metabolism. Functionally, mutarotase converts alpha-aldose to the beta-anomer. It is active on D-glucose, L-arabinose, D-xylose, D-galactose, maltose and lactose. The protein is Bifunctional protein gal10 (gal10) of Schizosaccharomyces pombe (strain 972 / ATCC 24843) (Fission yeast).